Here is a 267-residue protein sequence, read N- to C-terminus: NAD kinase (267 aa).

Residue Asp-52 is the Proton acceptor of the active site. Residues 52 to 53, Arg-57, 121 to 122, Arg-132, Lys-150, Asp-152, 163 to 168, and Ala-187 each bind NAD(+); these read DG, NE, and TAYSLS.

Belongs to the NAD kinase family. It depends on a divalent metal cation as a cofactor.

It is found in the cytoplasm. It carries out the reaction NAD(+) + ATP = ADP + NADP(+) + H(+). Functionally, involved in the regulation of the intracellular balance of NAD and NADP, and is a key enzyme in the biosynthesis of NADP. Catalyzes specifically the phosphorylation on 2'-hydroxyl of the adenosine moiety of NAD to yield NADP. The polypeptide is NAD kinase (Fusobacterium nucleatum subsp. nucleatum (strain ATCC 25586 / DSM 15643 / BCRC 10681 / CIP 101130 / JCM 8532 / KCTC 2640 / LMG 13131 / VPI 4355)).